The chain runs to 513 residues: Xylose import ATP-binding protein XylG (513 aa).

ABC transporter domains lie at 5 to 242 (LEMK…VGRE) and 259 to 505 (LRIE…LRSE). 37–44 (GENGSGKS) is a binding site for ATP.

This sequence belongs to the ABC transporter superfamily. Xylose importer (TC 3.A.1.2.4) family. The complex is composed of two ATP-binding proteins (XylG), two transmembrane proteins (XylH) and a solute-binding protein (XylF).

It is found in the cell inner membrane. It carries out the reaction D-xylose(out) + ATP + H2O = D-xylose(in) + ADP + phosphate + H(+). In terms of biological role, part of the ABC transporter complex XylFGH involved in xylose import. Responsible for energy coupling to the transport system. The polypeptide is Xylose import ATP-binding protein XylG (Shigella flexneri serotype 5b (strain 8401)).